The following is an 87-amino-acid chain: U14-lycotoxin-Ls1b (87 aa).

An N-terminal signal peptide occupies residues 1 to 20 (MNSKVFAVLLLLALSTCVLS). The region spanning 21–66 (EKYCPTPRNTSCKKMNIRNNCCRDSDCTSNAFCCAEPCGNFCHKAS) is the WAP domain. Cystine bridges form between Cys-24–Cys-54, Cys-32–Cys-58, Cys-41–Cys-53, Cys-42–Cys-80, and Cys-47–Cys-62.

Belongs to the venom protein 11 family. 01 (wap-1) subfamily. In terms of processing, contains 5 disulfide bonds. Expressed by the venom gland.

It localises to the secreted. Its function is as follows. Has antibacterial activity. This chain is U14-lycotoxin-Ls1b, found in Lycosa singoriensis (Wolf spider).